Consider the following 93-residue polypeptide: MPRSVKKGPIVASHLLAKIEKQKNLKNKKVIQTWSRSSTITPIFVGHKIAVYNGREHIPVYITENMVGHKLGEFSPTRTYRGHNKKDKKMQKK.

A disordered region spans residues 72–93 (GEFSPTRTYRGHNKKDKKMQKK). Positions 80 to 93 (YRGHNKKDKKMQKK) are enriched in basic residues.

It belongs to the universal ribosomal protein uS19 family.

Functionally, protein S19 forms a complex with S13 that binds strongly to the 16S ribosomal RNA. This Aster yellows witches'-broom phytoplasma (strain AYWB) protein is Small ribosomal subunit protein uS19.